Reading from the N-terminus, the 185-residue chain is Ribosome-recycling factor (185 aa).

This sequence belongs to the RRF family.

The protein localises to the cytoplasm. Functionally, responsible for the release of ribosomes from messenger RNA at the termination of protein biosynthesis. May increase the efficiency of translation by recycling ribosomes from one round of translation to another. The sequence is that of Ribosome-recycling factor from Geobacillus thermodenitrificans (strain NG80-2).